A 586-amino-acid chain; its full sequence is Estrogen receptor (586 aa).

A modulating region spans residues 1-179; sequence MTMPLPNKTT…SMESTKETRY (179 aa). A disordered region spans residues 144–173; the sequence is FYRSSSDNRRQSGRERMSSANDKGPPSMES. Residues 149-160 are compositionally biased toward basic and acidic residues; the sequence is SDNRRQSGRERM. NR C4-type zinc fingers lie at residues 180–200 and 216–240; these read CAVC…CEGC and CPAT…LRKC. Positions 180–245 form a DNA-binding region, nuclear receptor; the sequence is CAVCSDYASG…RLRKCYEVGM (66 aa). A hinge region spans residues 246–302; the sequence is MKGGIRKDRRGGRLLKHKRQKEEQEQKNDVDPSEIRTASIWVNPSVKSMKLSPVLSL. The span at 252–264 shows a compositional bias: basic residues; sequence KDRRGGRLLKHKR. Residues 252-276 form a disordered region; it reads KDRRGGRLLKHKRQKEEQEQKNDVD. The segment covering 265-276 has biased composition (basic and acidic residues); sequence QKEEQEQKNDVD. The NR LBD domain maps to 303–539; it reads TAEQLISALM…DLLLEMLDAH (237 aa). Basic and acidic residues predominate over residues 543–556; the sequence is TPKDKTTTQEEDSR. The disordered stretch occupies residues 543–569; that stretch reads TPKDKTTTQEEDSRSPPTTTVNGASPC.

The protein belongs to the nuclear hormone receptor family. NR3 subfamily. Binds DNA as a homodimer. Can form a heterodimer with ER-beta.

It is found in the nucleus. Functionally, the steroid hormones and their receptors are involved in the regulation of eukaryotic gene expression and affect cellular proliferation and differentiation in target tissues. In Xenopus laevis (African clawed frog), this protein is Estrogen receptor (esr1).